Reading from the N-terminus, the 616-residue chain is Leucine aminopeptidase (616 aa).

Substrate contacts are provided by residues 128–130 (QCQ) and 282–286 (GGMEN). His309 contributes to the Zn(2+) binding site. The Proton acceptor role is filled by Glu310. 2 residues coordinate Zn(2+): His313 and Glu332. Tyr397 serves as the catalytic Proton donor. 566 to 568 (RMK) is a binding site for substrate.

Belongs to the peptidase M1 family. The cofactor is Zn(2+).

Its subcellular location is the cytoplasm. It carries out the reaction an epoxide + H2O = an ethanediol. Aminopeptidase that preferentially cleaves di- and tripeptides. Also has low epoxide hydrolase activity (in vitro). Can hydrolyze the epoxide leukotriene LTA(4) but it forms preferentially 5,6-dihydroxy-7,9,11,14-eicosatetraenoic acid rather than the cytokine leukotriene B(4) as the product compared to the homologous mammalian enzyme (in vitro). In Arabidopsis thaliana (Mouse-ear cress), this protein is Leucine aminopeptidase (LKHA4).